The chain runs to 369 residues: uncharacterized protein (369 aa).

9 helical membrane passes run 25-45 (QWVI…TVHW), 47-67 (FGLL…LMPE), 119-139 (LNIV…FGVM), 152-172 (ITGF…FSAL), 206-226 (GALH…LFAI), 235-255 (LQAV…TLHL), 268-288 (LLFT…LPLI), 295-315 (LVGF…TTVF), and 323-343 (WVFY…GTVF).

To B.subtilis ComEC.

It is found in the cell membrane. This is an uncharacterized protein from Mycoplasma pneumoniae (strain ATCC 29342 / M129 / Subtype 1) (Mycoplasmoides pneumoniae).